The primary structure comprises 611 residues: Threonine--tRNA ligase (611 aa).

The tract at residues 211–509 (DHRKLGTELE…LTEHYAGEFP (299 aa)) is catalytic. Zn(2+) contacts are provided by cysteine 310, histidine 361, and histidine 486.

This sequence belongs to the class-II aminoacyl-tRNA synthetase family. Homodimer. It depends on Zn(2+) as a cofactor.

The protein resides in the cytoplasm. The catalysed reaction is tRNA(Thr) + L-threonine + ATP = L-threonyl-tRNA(Thr) + AMP + diphosphate + H(+). Catalyzes the attachment of threonine to tRNA(Thr) in a two-step reaction: L-threonine is first activated by ATP to form Thr-AMP and then transferred to the acceptor end of tRNA(Thr). Also edits incorrectly charged L-seryl-tRNA(Thr). The chain is Threonine--tRNA ligase from Nautilia profundicola (strain ATCC BAA-1463 / DSM 18972 / AmH).